A 397-amino-acid polypeptide reads, in one-letter code: Lysophospholipid transporter LplT (397 aa).

11 helical membrane-spanning segments follow: residues 16 to 36, 53 to 73, 91 to 111, 139 to 159, 164 to 184, 227 to 247, 253 to 273, 281 to 301, 305 to 325, 352 to 372, and 373 to 393; these read MLAV…LLFA, VLQM…GQFA, LGAG…LVGI, LMES…GILA, LAAL…NLWI, LFWG…PVAL, AMPT…AGAA, TVSR…AFAV, LLPA…FIVP, NVAM…GVPP, and VAVG…LWVW.

This sequence belongs to the major facilitator superfamily. LplT (TC 2.A.1.42) family.

Its subcellular location is the cell inner membrane. In terms of biological role, catalyzes the facilitated diffusion of 2-acyl-glycero-3-phosphoethanolamine (2-acyl-GPE) into the cell. This chain is Lysophospholipid transporter LplT, found in Klebsiella pneumoniae (strain 342).